The primary structure comprises 496 residues: Anaerobic nitric oxide reductase flavorubredoxin (496 aa).

The segment at 30-210 (TKGTSYNSYL…PFSALVTAKI (181 aa)) is zinc metallo-hydrolase. Fe cation-binding residues include His-79, Glu-81, Asp-83, His-147, Asp-166, and His-227. A Flavodoxin-like domain is found at 254-393 (ITIFYDSMSN…LCREHGQFIA (140 aa)). FMN-binding positions include 260-264 (SMSNN) and 342-369 (AFGS…ETAV). The Rubredoxin-like domain maps to 444–495 (KQCMLCSVCNWVYDPEIGEPNQGVEPNTPWSSVPNDFLCPECHLGKDVFVEI). Fe cation is bound by residues Cys-449, Cys-452, Cys-482, and Cys-485.

This sequence in the N-terminal section; belongs to the zinc metallo-hydrolase group 3 family. Homotetramer. It depends on Fe cation as a cofactor. FMN serves as cofactor.

It is found in the cytoplasm. The protein operates within nitrogen metabolism; nitric oxide reduction. Anaerobic nitric oxide reductase; uses NADH to detoxify nitric oxide (NO), protecting several 4Fe-4S NO-sensitive enzymes. Has at least 2 reductase partners, only one of which (NorW, flavorubredoxin reductase) has been identified. NO probably binds to the di-iron center; electrons enter from the NorW at rubredoxin and are transferred sequentially to the FMN center and the di-iron center. Also able to function as an aerobic oxygen reductase. The polypeptide is Anaerobic nitric oxide reductase flavorubredoxin (Aliivibrio fischeri (strain ATCC 700601 / ES114) (Vibrio fischeri)).